Reading from the N-terminus, the 108-residue chain is ATP synthase peripheral stalk subunit F6, mitochondrial (108 aa).

Residues 1–32 (MILQRLFRLSSAVQSAISVSWRRNIGITAVAF) constitute a mitochondrion transit peptide. Residues Lys41, Lys46, and Lys79 each carry the N6-acetyllysine modification. Residues Lys84 and Lys99 each carry the N6-acetyllysine; alternate modification. N6-succinyllysine; alternate occurs at positions 84 and 99. Residue Lys105 is modified to N6-acetyllysine. The residue at position 108 (Ser108) is a Phosphoserine.

This sequence belongs to the eukaryotic ATPase subunit F6 family. As to quaternary structure, component of the ATP synthase complex composed at least of ATP5F1A/subunit alpha, ATP5F1B/subunit beta, ATP5MC1/subunit c (homooctomer), MT-ATP6/subunit a, MT-ATP8/subunit 8, ATP5ME/subunit e, ATP5MF/subunit f, ATP5MG/subunit g, ATP5MK/subunit k, ATP5MJ/subunit j, ATP5F1C/subunit gamma, ATP5F1D/subunit delta, ATP5F1E/subunit epsilon, ATP5PF/subunit F6, ATP5PB/subunit b, ATP5PD/subunit d, ATP5PO/subunit OSCP. ATP synthase complex consists of a soluble F(1) head domain (subunits alpha(3) and beta(3)) - the catalytic core - and a membrane F(0) domain - the membrane proton channel (subunits c, a, 8, e, f, g, k and j). These two domains are linked by a central stalk (subunits gamma, delta, and epsilon) rotating inside the F1 region and a stationary peripheral stalk (subunits F6, b, d, and OSCP).

It is found in the mitochondrion. It localises to the mitochondrion inner membrane. Its function is as follows. Subunit F6, of the mitochondrial membrane ATP synthase complex (F(1)F(0) ATP synthase or Complex V) that produces ATP from ADP in the presence of a proton gradient across the membrane which is generated by electron transport complexes of the respiratory chain. ATP synthase complex consist of a soluble F(1) head domain - the catalytic core - and a membrane F(1) domain - the membrane proton channel. These two domains are linked by a central stalk rotating inside the F(1) region and a stationary peripheral stalk. During catalysis, ATP synthesis in the catalytic domain of F(1) is coupled via a rotary mechanism of the central stalk subunits to proton translocation. In vivo, can only synthesize ATP although its ATP hydrolase activity can be activated artificially in vitro. Part of the complex F(0) domain. Part of the complex F(0) domain and the peripheric stalk, which acts as a stator to hold the catalytic alpha(3)beta(3) subcomplex and subunit a/ATP6 static relative to the rotary elements. The polypeptide is ATP synthase peripheral stalk subunit F6, mitochondrial (Bos taurus (Bovine)).